We begin with the raw amino-acid sequence, 425 residues long: Glutamate-1-semialdehyde 2,1-aminomutase (425 aa).

An N6-(pyridoxal phosphate)lysine modification is found at Lys264.

This sequence belongs to the class-III pyridoxal-phosphate-dependent aminotransferase family. HemL subfamily. In terms of assembly, homodimer. Pyridoxal 5'-phosphate serves as cofactor.

The protein resides in the cytoplasm. It catalyses the reaction (S)-4-amino-5-oxopentanoate = 5-aminolevulinate. The protein operates within porphyrin-containing compound metabolism; protoporphyrin-IX biosynthesis; 5-aminolevulinate from L-glutamyl-tRNA(Glu): step 2/2. This Hydrogenobaculum sp. (strain Y04AAS1) protein is Glutamate-1-semialdehyde 2,1-aminomutase.